A 479-amino-acid polypeptide reads, in one-letter code: Dihydrolipoyl dehydrogenase (479 aa).

FAD-binding positions include 41–50, K59, A124, and 153–155; these read EKRGALGGTC and TGS. C50 and C55 form a disulfide bridge. Residues 190–197, E213, I247, and G284 each bind NAD(+); that span reads GGGVIGLE. Residues D325 and 332–335 each bind FAD; that span reads MLAH. The Proton acceptor role is filled by H458.

The protein belongs to the class-I pyridine nucleotide-disulfide oxidoreductase family. As to quaternary structure, homodimer. FAD serves as cofactor.

The catalysed reaction is N(6)-[(R)-dihydrolipoyl]-L-lysyl-[protein] + NAD(+) = N(6)-[(R)-lipoyl]-L-lysyl-[protein] + NADH + H(+). The sequence is that of Dihydrolipoyl dehydrogenase from Trypanosoma brucei brucei.